The sequence spans 205 residues: Microtubule-associated protein Jupiter (205 aa).

S30 is subject to Phosphoserine. T41, T98, and T102 each carry phosphothreonine. Positions 124-135 (LISNSKGNYNGK) are enriched in polar residues. The disordered stretch occupies residues 124 to 205 (LISNSKGNYN…PPGGYSSGLW (82 aa)). The segment covering 136 to 149 (SGSVSSASSSVSSS) has biased composition (low complexity). Phosphoserine occurs at positions 138 and 149. Residues 181–191 (PANNGSSQVIN) show a composition bias toward polar residues.

Belongs to the MAP Jupiter family.

Its subcellular location is the nucleus. It is found in the cytoplasm. It localises to the cytoskeleton. The protein localises to the spindle. Binds to all microtubule populations. The protein is Microtubule-associated protein Jupiter of Drosophila virilis (Fruit fly).